The sequence spans 123 residues: Large ribosomal subunit protein uL18 (123 aa).

It belongs to the universal ribosomal protein uL18 family. Part of the 50S ribosomal subunit; part of the 5S rRNA/L5/L18/L25 subcomplex. Contacts the 5S and 23S rRNAs.

Its function is as follows. This is one of the proteins that bind and probably mediate the attachment of the 5S RNA into the large ribosomal subunit, where it forms part of the central protuberance. The polypeptide is Large ribosomal subunit protein uL18 (Protochlamydia amoebophila (strain UWE25)).